Here is a 291-residue protein sequence, read N- to C-terminus: KVLVFFVATILVAWQCHAYDMFPLRMNTGYGARTPEVKCASWRLAVEAHNIFGFETIPEECVEATKEYIHGEQYRSDSKTVNQQAYFYARDLEVHPKDTFVFSIDGTVLSNIPYYKKHGYGVEKFNSTLYDEWVNKGNAPALPETLKNYNKLVSLGFKIIFLSGRTLDKQAVTEANLKKAGYHTWEKLILKDPQDPSTPNAVSYKTAAREKLIRQGYNIVGIIGDQWSDLLGGHRGESRTFKLPNPCTTFSSSFTSQQSSLLPIYLYVIRCVQIGALASLYVVSAVCQQVM.

N-linked (GlcNAc...) asparagine glycosylation is present at Asn126.

In terms of tissue distribution, accumulates in the stems of developing soybean seedlings.

In terms of biological role, may function as somatic storage protein during early seedling development. This Glycine max (Soybean) protein is Stem 31 kDa glycoprotein (VSP25).